We begin with the raw amino-acid sequence, 194 residues long: Insertion element IS136 uncharacterized 21.2 kDa protein (194 aa).

The disordered stretch occupies residues 73-103; the sequence is SCDRACAPTPGRDPPVSSLPNSRQPARQNPR. Residues 90-103 are compositionally biased toward polar residues; that stretch reads SLPNSRQPARQNPR.

The polypeptide is Insertion element IS136 uncharacterized 21.2 kDa protein (Agrobacterium tumefaciens (strain T37)).